Here is a 507-residue protein sequence, read N- to C-terminus: Maturase K (507 aa).

The protein belongs to the intron maturase 2 family. MatK subfamily.

The protein localises to the plastid. It is found in the chloroplast. Its function is as follows. Usually encoded in the trnK tRNA gene intron. Probably assists in splicing its own and other chloroplast group II introns. The protein is Maturase K of Liriodendron chinense (Chinese tulip tree).